The primary structure comprises 249 residues: ATP synthase subunit a (249 aa).

The next 6 helical transmembrane spans lie at F26–L46, F84–F104, I114–W134, L143–I163, I185–A205, and A208–L228.

The protein belongs to the ATPase A chain family. As to quaternary structure, F-type ATPases have 2 components, CF(1) - the catalytic core - and CF(0) - the membrane proton channel. CF(1) has five subunits: alpha(3), beta(3), gamma(1), delta(1), epsilon(1). CF(0) has three main subunits: a(1), b(2) and c(9-12). The alpha and beta chains form an alternating ring which encloses part of the gamma chain. CF(1) is attached to CF(0) by a central stalk formed by the gamma and epsilon chains, while a peripheral stalk is formed by the delta and b chains.

The protein localises to the cell inner membrane. In terms of biological role, key component of the proton channel; it plays a direct role in the translocation of protons across the membrane. The sequence is that of ATP synthase subunit a from Chelativorans sp. (strain BNC1).